Here is a 220-residue protein sequence, read N- to C-terminus: Ribosomal RNA large subunit methyltransferase E (220 aa).

S-adenosyl-L-methionine-binding residues include glycine 60, tryptophan 62, aspartate 92, aspartate 108, and aspartate 133. The Proton acceptor role is filled by lysine 173.

It belongs to the class I-like SAM-binding methyltransferase superfamily. RNA methyltransferase RlmE family.

It localises to the cytoplasm. The enzyme catalyses uridine(2552) in 23S rRNA + S-adenosyl-L-methionine = 2'-O-methyluridine(2552) in 23S rRNA + S-adenosyl-L-homocysteine + H(+). Functionally, specifically methylates the uridine in position 2552 of 23S rRNA at the 2'-O position of the ribose in the fully assembled 50S ribosomal subunit. The sequence is that of Ribosomal RNA large subunit methyltransferase E from Paraburkholderia phytofirmans (strain DSM 17436 / LMG 22146 / PsJN) (Burkholderia phytofirmans).